The following is a 320-amino-acid chain: Cytochrome f (320 aa).

An N-terminal signal peptide occupies residues 1–35 (MQTINTFSWIKEQITRSISISLILYIITRSSIANA). The heme site is built by Tyr36, Cys56, Cys59, and His60. A helical transmembrane segment spans residues 286–305 (IQGLLFFFASVILAQIFLVL).

This sequence belongs to the cytochrome f family. As to quaternary structure, the 4 large subunits of the cytochrome b6-f complex are cytochrome b6, subunit IV (17 kDa polypeptide, petD), cytochrome f and the Rieske protein, while the 4 small subunits are PetG, PetL, PetM and PetN. The complex functions as a dimer. Heme is required as a cofactor.

It localises to the plastid. Its subcellular location is the chloroplast thylakoid membrane. Component of the cytochrome b6-f complex, which mediates electron transfer between photosystem II (PSII) and photosystem I (PSI), cyclic electron flow around PSI, and state transitions. The sequence is that of Cytochrome f (petA) from Spinacia oleracea (Spinach).